Here is a 687-residue protein sequence, read N- to C-terminus: Protein SDA1 homolog (687 aa).

Phosphoserine is present on residues Ser-232, Ser-234, and Ser-236. Positions 254–315 form a coiled coil; sequence KKGSKNKKKL…SCKERFEVKM (62 aa). The segment at 484–509 is disordered; sequence LEKGENTEDDEDGWESASLSEEEEED. Acidic residues predominate over residues 490–509; sequence TEDDEDGWESASLSEEEEED. The residue at position 552 (Thr-552) is a Phosphothreonine. Phosphoserine occurs at positions 585, 589, and 595. A disordered region spans residues 604 to 651; that stretch reads KKPKSDKETRLATAMAGRTDRKEFVRKKTKINPFSSSTNKEKKKQKNF.

This sequence belongs to the SDA1 family.

It is found in the nucleus. Its subcellular location is the nucleolus. In terms of biological role, required for 60S pre-ribosomal subunits export to the cytoplasm. The protein is Protein SDA1 homolog (Sdad1) of Mus musculus (Mouse).